The following is a 121-amino-acid chain: Small ribosomal subunit protein uS13 (121 aa).

The tract at residues 94 to 121 is disordered; the sequence is GLPVRGQSSKTNARTVKGPRKTVANKKK. Basic residues predominate over residues 110–121; that stretch reads KGPRKTVANKKK.

This sequence belongs to the universal ribosomal protein uS13 family. In terms of assembly, part of the 30S ribosomal subunit. Forms a loose heterodimer with protein S19. Forms two bridges to the 50S subunit in the 70S ribosome.

Located at the top of the head of the 30S subunit, it contacts several helices of the 16S rRNA. In the 70S ribosome it contacts the 23S rRNA (bridge B1a) and protein L5 of the 50S subunit (bridge B1b), connecting the 2 subunits; these bridges are implicated in subunit movement. Contacts the tRNAs in the A and P-sites. The chain is Small ribosomal subunit protein uS13 from Mesoplasma florum (strain ATCC 33453 / NBRC 100688 / NCTC 11704 / L1) (Acholeplasma florum).